A 347-amino-acid polypeptide reads, in one-letter code: NADH-quinone oxidoreductase subunit H (347 aa).

Transmembrane regions (helical) follow at residues glycine 22–leucine 42, proline 59–phenylalanine 79, phenylalanine 93–isoleucine 113, isoleucine 124–alanine 144, methionine 171–valine 191, proline 198–alanine 218, valine 240–leucine 260, isoleucine 285–isoleucine 305, and glycine 321–valine 341.

Belongs to the complex I subunit 1 family. As to quaternary structure, NDH-1 is composed of 14 different subunits. Subunits NuoA, H, J, K, L, M, N constitute the membrane sector of the complex.

It is found in the cell inner membrane. It catalyses the reaction a quinone + NADH + 5 H(+)(in) = a quinol + NAD(+) + 4 H(+)(out). NDH-1 shuttles electrons from NADH, via FMN and iron-sulfur (Fe-S) centers, to quinones in the respiratory chain. The immediate electron acceptor for the enzyme in this species is believed to be ubiquinone. Couples the redox reaction to proton translocation (for every two electrons transferred, four hydrogen ions are translocated across the cytoplasmic membrane), and thus conserves the redox energy in a proton gradient. This subunit may bind ubiquinone. The polypeptide is NADH-quinone oxidoreductase subunit H (Orientia tsutsugamushi (strain Ikeda) (Rickettsia tsutsugamushi)).